A 266-amino-acid polypeptide reads, in one-letter code: Phosphate import ATP-binding protein PstB 1 (266 aa).

The ABC transporter domain occupies 21-261 (ISTQDLSVFY…PKGEITEDYI (241 aa)). ATP is bound at residue 54–61 (GGSGSGKS).

It belongs to the ABC transporter superfamily. Phosphate importer (TC 3.A.1.7) family. The complex is composed of two ATP-binding proteins (PstB), two transmembrane proteins (PstC and PstA) and a solute-binding protein (PstS).

It is found in the cell membrane. The enzyme catalyses phosphate(out) + ATP + H2O = ADP + 2 phosphate(in) + H(+). Functionally, part of the ABC transporter complex PstSACB involved in phosphate import. Responsible for energy coupling to the transport system. The protein is Phosphate import ATP-binding protein PstB 1 of Lactobacillus johnsonii (strain CNCM I-12250 / La1 / NCC 533).